The chain runs to 104 residues: Large ribosomal subunit protein uL24 (104 aa).

The protein belongs to the universal ribosomal protein uL24 family. Part of the 50S ribosomal subunit.

Functionally, one of two assembly initiator proteins, it binds directly to the 5'-end of the 23S rRNA, where it nucleates assembly of the 50S subunit. Its function is as follows. One of the proteins that surrounds the polypeptide exit tunnel on the outside of the subunit. The sequence is that of Large ribosomal subunit protein uL24 from Bradyrhizobium sp. (strain BTAi1 / ATCC BAA-1182).